The sequence spans 255 residues: Triosephosphate isomerase (255 aa).

10 to 12 (NWK) lines the substrate pocket. Catalysis depends on histidine 96, which acts as the Electrophile. Glutamate 168 (proton acceptor) is an active-site residue. Substrate contacts are provided by residues glycine 174, serine 213, and 234–235 (GG).

This sequence belongs to the triosephosphate isomerase family. As to quaternary structure, homodimer.

The protein localises to the cytoplasm. It catalyses the reaction D-glyceraldehyde 3-phosphate = dihydroxyacetone phosphate. The protein operates within carbohydrate biosynthesis; gluconeogenesis. It functions in the pathway carbohydrate degradation; glycolysis; D-glyceraldehyde 3-phosphate from glycerone phosphate: step 1/1. Its function is as follows. Involved in the gluconeogenesis. Catalyzes stereospecifically the conversion of dihydroxyacetone phosphate (DHAP) to D-glyceraldehyde-3-phosphate (G3P). The chain is Triosephosphate isomerase from Histophilus somni (strain 2336) (Haemophilus somnus).